The primary structure comprises 373 residues: GTP cyclohydrolase 1 type 2 homolog (373 aa).

A divalent metal cation is bound by residues His-67, His-68, Asp-106, His-333, and Glu-336.

This sequence belongs to the GTP cyclohydrolase I type 2/NIF3 family. Homohexamer.

In Listeria monocytogenes serovar 1/2a (strain ATCC BAA-679 / EGD-e), this protein is GTP cyclohydrolase 1 type 2 homolog.